The chain runs to 278 residues: Para-Rep C1 (278 aa).

The 95-residue stretch at 1–95 (MACSNWVFTR…VAGPWSYGDL (95 aa)) folds into the CRESS-DNA virus Rep endonuclease domain. Positions 8–11 (FTRN) match the RCR-1 motif. Positions 33 and 39 each coordinate a divalent metal cation. The short motif at 39–41 (HIQ) is the RCR-2 element. The short motif at 48 to 69 (KKARFSTVKEIIGGNPHVEKMK) is the Nuclear localization signal element. The active-site For DNA cleavage activity is tyrosine 78. The short motif at 78 to 81 (YVQK) is the RCR-3 element. Glutamate 83 lines the a divalent metal cation pocket. The Nuclear localization signal motif lies at 95-101 (LLKRGSH). ATP is bound at residue 176-178 (GKS).

The protein belongs to the nanoviridea/circoviridae replication-associated protein family. Homooligomer (Potential). Rep binds to repeated DNA motifs (iterons). It depends on Mg(2+) as a cofactor. Mn(2+) is required as a cofactor.

Its subcellular location is the host nucleus. It carries out the reaction ATP + H2O = ADP + phosphate + H(+). In terms of biological role, initiates and terminates the replication only of its own subviral DNA molecule. The closed circular ssDNA genome is first converted to a superhelical dsDNA. Rep binds a specific hairpin at the genome origin of replication. Introduces an endonucleolytic nick within the intergenic region of the genome, thereby initiating the rolling circle replication (RCR). Following cleavage, binds covalently to the 5'-phosphate of DNA as a tyrosyl ester. The cleavage gives rise to a free 3'-OH that serves as a primer for the cellular DNA polymerase. The polymerase synthesizes the (+) strand DNA by rolling circle mechanism. After one round of replication, a Rep-catalyzed nucleotidyl transfer reaction releases a circular single-stranded virus genome, thereby terminating the replication. Displays origin-specific DNA cleavage, nucleotidyl transferase, ATPase and helicase activities. The polypeptide is Para-Rep C1 (C1) (Faba bean necrotic yellows C1 alphasatellite (FBNYC1A)).